We begin with the raw amino-acid sequence, 180 residues long: Homeobox protein ceh-12 (180 aa).

The tract at residues 15–37 (SSQNEDQKLESHPSPPSQIPNYS) is disordered. The segment at residues 110-169 (MRRPRTAFSSEQLVQLEKQFSDNRYLSRPRRYQLAQQLSLSETQIKIWFQNRRMKNKRCP) is a DNA-binding region (homeobox).

In terms of tissue distribution, expressed in VB motor neurons in the ventral nerve cord.

The protein resides in the nucleus. In terms of biological role, transcription factor. Plays a role, downstream from homeobox protein unc-4 and Wnt signaling, in specifying synaptic inputs to A-class motor neurons. Involved in patterning of the synaptic outputs of the postmitotic DA class cholinergic motor neurons. This Caenorhabditis elegans protein is Homeobox protein ceh-12 (ceh-12).